The following is a 455-amino-acid chain: mRNA cleavage and polyadenylation factor CLP1 (455 aa).

2 residues coordinate ATP: glutamate 28 and lysine 67. The tract at residues 112-131 (EAAARNNGGGRSAPHGPRVL) is disordered. 137-142 (GCGRTS) serves as a coordination point for ATP.

Belongs to the Clp1 family. Clp1 subfamily. Component of a pre-mRNA cleavage factor complex. Interacts directly with PCF11.

The protein resides in the nucleus. Its function is as follows. Required for endonucleolytic cleavage during polyadenylation-dependent pre-mRNA 3'-end formation. The protein is mRNA cleavage and polyadenylation factor CLP1 of Pyricularia oryzae (strain 70-15 / ATCC MYA-4617 / FGSC 8958) (Rice blast fungus).